The sequence spans 85 residues: Large ribosomal subunit protein bL27 (85 aa).

The tract at residues 1–22 (MAHKKAGGSTKNGRDSESKRLG) is disordered.

The protein belongs to the bacterial ribosomal protein bL27 family.

The sequence is that of Large ribosomal subunit protein bL27 from Alteromonas mediterranea (strain DSM 17117 / CIP 110805 / LMG 28347 / Deep ecotype).